A 440-amino-acid polypeptide reads, in one-letter code: Protein CANDIDATE G-PROTEIN COUPLED RECEPTOR 7 (440 aa).

The signal sequence occupies residues 1–24; sequence MAKMPLSVVVFLLFSAAFLAVSMA. Asn-124 and Asn-162 each carry an N-linked (GlcNAc...) asparagine glycan. 5 helical membrane-spanning segments follow: residues 175 to 195, 207 to 227, 243 to 263, 281 to 301, and 315 to 335; these read LPTL…FWSY, IHLL…CAAE, ILFY…IILI, VLII…VIGE, and VFLL…VWSI. N-linked (GlcNAc...) asparagine glycosylation is present at Asn-351. The next 2 membrane-spanning stretches (helical) occupy residues 363–383 and 390–410; these read IVVI…KTIA and VSFA…FHMF.

This sequence belongs to the LU7TM family.

It localises to the membrane. In terms of biological role, plays a role in plants and microbes interactions. G-protein coupled receptor involved in root growth mediated by the bacterial quorum-sensing signals N-acyl-homoserine lactones (AHLs). The protein is Protein CANDIDATE G-PROTEIN COUPLED RECEPTOR 7 of Arabidopsis thaliana (Mouse-ear cress).